The sequence spans 311 residues: Ribosomal protein L11 methyltransferase (311 aa).

Residues Thr163, Gly184, Asp206, and Asn248 each coordinate S-adenosyl-L-methionine.

It belongs to the methyltransferase superfamily. PrmA family.

The protein resides in the cytoplasm. It carries out the reaction L-lysyl-[protein] + 3 S-adenosyl-L-methionine = N(6),N(6),N(6)-trimethyl-L-lysyl-[protein] + 3 S-adenosyl-L-homocysteine + 3 H(+). Its function is as follows. Methylates ribosomal protein L11. This Clostridium acetobutylicum (strain ATCC 824 / DSM 792 / JCM 1419 / IAM 19013 / LMG 5710 / NBRC 13948 / NRRL B-527 / VKM B-1787 / 2291 / W) protein is Ribosomal protein L11 methyltransferase.